Reading from the N-terminus, the 88-residue chain is MADSTAGAKKRKKRSTSATSTRKEPPTVIPEDECTTCSICQSKLVMFSGVSKYKLSDYLNTGKVFTNSNIRCKACGSSLCHLRDLSKS.

A disordered region spans residues 1–28; sequence MADSTAGAKKRKKRSTSATSTRKEPPTV.

The protein belongs to the chordopoxvirinae A19 family.

The sequence is that of Protein A19 homolog from Fowlpox virus (strain NVSL) (FPV).